The sequence spans 148 residues: Large ribosomal subunit protein uL15 (148 aa).

The disordered stretch occupies residues 1–61; it reads MELNELRPAV…GGQMPMQRRL (61 aa). Basic residues predominate over residues 30-39; it reads TATKGHKGQK.

The protein belongs to the universal ribosomal protein uL15 family. In terms of assembly, part of the 50S ribosomal subunit.

In terms of biological role, binds to the 23S rRNA. The protein is Large ribosomal subunit protein uL15 of Geobacter sulfurreducens (strain ATCC 51573 / DSM 12127 / PCA).